A 79-amino-acid chain; its full sequence is MAAPSMKERQACWGARDLYWRCLDDNAEDAARCQKLRSSFEASCPQQWIKYFDKRRDYLKFKEKFEAGGFQSSQSTENS.

One can recognise a CHCH domain in the interval 9–52 (RQACWGARDLYWRCLDDNAEDAARCQKLRSSFEASCPQQWIKYF). Residues 12–22 (CWGARDLYWRC) carry the Cx9C motif motif. 2 cysteine pairs are disulfide-bonded: Cys-12–Cys-44 and Cys-22–Cys-33. The short motif at 33–44 (CQKLRSSFEASC) is the Cx10C motif element.

This sequence belongs to the cytochrome c oxidase subunit 6B family. As to quaternary structure, found in a complex with TMEM177, COX20, MT-CO2/COX2, COX18, SCO1 and SCO2. Interacts with COA1, MT-CO2/COX2, SCO1, SCO2 and COX20. Interacts with COX20 in a MT-CO2/COX2- and COX18-dependent manner. Interacts with COX16.

The protein localises to the mitochondrion. It localises to the mitochondrion intermembrane space. Functionally, involved in the maturation of the mitochondrial respiratory chain complex IV subunit MT-CO2/COX2. Thereby, may regulate early steps of complex IV assembly. Mitochondrial respiratory chain complex IV or cytochrome c oxidase is the component of the respiratory chain that catalyzes the transfer of electrons from intermembrane space cytochrome c to molecular oxygen in the matrix and as a consequence contributes to the proton gradient involved in mitochondrial ATP synthesis. May also be required for efficient formation of respiratory supercomplexes comprised of complexes III and IV. This is Cytochrome c oxidase assembly factor 6 homolog (Coa6) from Mus musculus (Mouse).